A 303-amino-acid polypeptide reads, in one-letter code: Sulfotransferase 6B1 (303 aa).

65 to 70 (KCGSNW) contacts 3'-phosphoadenylyl sulfate. The active-site Proton acceptor is the H118. 3'-phosphoadenylyl sulfate-binding positions include R140, S148, Y203, 237 to 242 (STFLAM), and 259 to 261 (RKG).

It belongs to the sulfotransferase 1 family. In terms of tissue distribution, expressed in brain, heart, kidney, thymus, lung, liver and testis.

Its subcellular location is the cytoplasm. The protein localises to the cytosol. The enzyme catalyses thyroxine + 3'-phosphoadenylyl sulfate = thyroxine sulfate + adenosine 3',5'-bisphosphate + H(+). Functionally, sulfotransferase that utilizes 3'-phospho-5'-adenylyl sulfate (PAPS) as sulfonate donor to catalyze the sulfate conjugation of thyroxine. Involved in the metabolism of thyroxine. This chain is Sulfotransferase 6B1 (Sult6b1), found in Mus musculus (Mouse).